The chain runs to 349 residues: UDP-N-acetylenolpyruvoylglucosamine reductase (349 aa).

An FAD-binding PCMH-type domain is found at 25-197 (GIDARARYAA…VSVTFRLPKR (173 aa)). Residue Arg173 is part of the active site. Ser249 (proton donor) is an active-site residue. Glu345 is an active-site residue.

It belongs to the MurB family. FAD is required as a cofactor.

The protein resides in the cytoplasm. The enzyme catalyses UDP-N-acetyl-alpha-D-muramate + NADP(+) = UDP-N-acetyl-3-O-(1-carboxyvinyl)-alpha-D-glucosamine + NADPH + H(+). Its pathway is cell wall biogenesis; peptidoglycan biosynthesis. In terms of biological role, cell wall formation. This Burkholderia multivorans (strain ATCC 17616 / 249) protein is UDP-N-acetylenolpyruvoylglucosamine reductase.